Here is a 465-residue protein sequence, read N- to C-terminus: Fumarate hydratase class II (465 aa).

Substrate-binding positions include 99-101, 130-133, 140-142, and Thr-188; these read SGT, HPND, and STN. His-189 acts as the Proton donor/acceptor in catalysis. The active site involves Ser-319. Substrate-binding positions include Ser-320 and 325 to 327; that span reads KVN.

The protein belongs to the class-II fumarase/aspartase family. Fumarase subfamily. As to quaternary structure, homotetramer.

Its subcellular location is the cytoplasm. The enzyme catalyses (S)-malate = fumarate + H2O. The protein operates within carbohydrate metabolism; tricarboxylic acid cycle; (S)-malate from fumarate: step 1/1. In terms of biological role, involved in the TCA cycle. Catalyzes the stereospecific interconversion of fumarate to L-malate. This is Fumarate hydratase class II from Prochlorococcus marinus (strain SARG / CCMP1375 / SS120).